The following is a 78-amino-acid chain: Large ribosomal subunit protein bL28 (78 aa).

Belongs to the bacterial ribosomal protein bL28 family.

The chain is Large ribosomal subunit protein bL28 from Prochlorococcus marinus (strain MIT 9301).